A 312-amino-acid chain; its full sequence is Plasma membrane-associated coenzyme Q6 reductase PGA3 (312 aa).

Residues 1-15 (MSKEDIEGTNILDEP) are Extracellular-facing. The chain crosses the membrane as a helical span at residues 16–36 (VHGIYIPAALFVVGVAITTYM). Topologically, residues 37 to 39 (SGE) are cytoplasmic. Residues 40 to 60 (LKILWSLPILFMIIFVRAYSA) form a helical membrane-spanning segment. At 61–179 (YKRRRSLYPD…LNYEPNSSKH (119 aa)) the chain is on the extracellular side. Positions 70–173 (DRWTSLELED…KGPIGTLNYE (104 aa)) constitute an FAD-binding FR-type domain. FAD is bound by residues 153-168 (AGLN…GPIG) and 179-211 (HLGI…KVSL). Residues 180–200 (LGIVAGGSGITPVLQILNEII) form a helical membrane-spanning segment. At 201 to 312 (TVPEDLTKVS…SSGDDQVFVF (112 aa)) the chain is on the cytoplasmic side.

This sequence belongs to the flavoprotein pyridine nucleotide cytochrome reductase family. FAD is required as a cofactor.

The protein localises to the cell membrane. It is found in the endoplasmic reticulum membrane. The enzyme catalyses 2 Fe(III)-[cytochrome b5] + NADH = 2 Fe(II)-[cytochrome b5] + NAD(+) + H(+). With respect to regulation, inhibited by diphenylene iodonium (DPI). Functionally, NADH-dependent cytochrome b5 reductase that reduces coenzyme Q6 at the plasma membrane and mediates lifespan extension by calorie restriction by shifting fermentative to respiratory metabolism, probably through modulating the NAD(+)/NADH ratio. This Saccharomyces cerevisiae (strain ATCC 204508 / S288c) (Baker's yeast) protein is Plasma membrane-associated coenzyme Q6 reductase PGA3 (PGA3).